A 418-amino-acid polypeptide reads, in one-letter code: 3-isopropylmalate dehydratase large subunit (418 aa).

Residues Cys-298, Cys-358, and Cys-361 each coordinate [4Fe-4S] cluster.

It belongs to the aconitase/IPM isomerase family. LeuC type 2 subfamily. In terms of assembly, heterodimer of LeuC and LeuD. The cofactor is [4Fe-4S] cluster.

The catalysed reaction is (2R,3S)-3-isopropylmalate = (2S)-2-isopropylmalate. It functions in the pathway amino-acid biosynthesis; L-leucine biosynthesis; L-leucine from 3-methyl-2-oxobutanoate: step 2/4. Functionally, catalyzes the isomerization between 2-isopropylmalate and 3-isopropylmalate, via the formation of 2-isopropylmaleate. The sequence is that of 3-isopropylmalate dehydratase large subunit from Thermoanaerobacter sp. (strain X514).